The sequence spans 277 residues: UPF0276 protein PSEEN3355 (277 aa).

Belongs to the UPF0276 family.

The chain is UPF0276 protein PSEEN3355 from Pseudomonas entomophila (strain L48).